We begin with the raw amino-acid sequence, 583 residues long: Putative fatty-acid--CoA ligase fadD25 (583 aa).

A run of 3 helical transmembrane segments spans residues 77 to 97 (YVVS…LSIP), 109 to 129 (VFAD…DNVV), and 229 to 249 (FVLG…TSPI). Residues 353 to 375 (IVQFDPQKLPDGQAERTESDGGT) are disordered.

The protein belongs to the ATP-dependent AMP-binding enzyme family.

The protein resides in the cell membrane. The chain is Putative fatty-acid--CoA ligase fadD25 (fadD25) from Mycobacterium tuberculosis (strain CDC 1551 / Oshkosh).